The chain runs to 195 residues: Transcription factor LBX2 (195 aa).

2 disordered regions span residues 1 to 89 (MNSV…KSRT) and 164 to 195 (PALP…QVDD). A DNA-binding region (homeobox) is located at residues 84-143 (RRKSRTAFTAQQVLELERRFVFQKYLAPSERDGLAARLGLANAQVVTWFQNRRAKLKRDV). A compositionally biased stretch (acidic residues) spans 186–195 (LSDEEIQVDD).

In terms of tissue distribution, expressed in the developing urogenital system, eye and brain.

It localises to the nucleus. Transcription factor. The chain is Transcription factor LBX2 (Lbx2) from Mus musculus (Mouse).